The sequence spans 538 residues: Phosphatidylethanolamine transferase Mcr-2 (538 aa).

The next 5 membrane-spanning stretches (helical) occupy residues 14–34 (PFVL…LTFF), 47–67 (LGFI…IVVL), 72–92 (YVLK…SYFT), 121–141 (LAFF…VAVA), and 161–181 (VSLV…ASFF). The Zn(2+) site is built by E244 and T283. Intrachain disulfides connect C279–C289, C354–C362, and C412–C420. T283 bears the Phosphothreonine mark. D463 and H464 together coordinate Zn(2+).

The protein belongs to the phosphoethanolamine transferase family. Monomer. Phosphorylated at Thr-283; may represent an intermediate in the catalytic mechanism.

Its subcellular location is the cell inner membrane. It catalyses the reaction lipid A (E. coli) + a 1,2-diacyl-sn-glycero-3-phosphoethanolamine + H(+) = lipid A 4'-(2-aminoethyl diphosphate) (E. coli) + a 1,2-diacyl-sn-glycerol. Its function is as follows. Probably catalyzes the addition of a phosphoethanolamine moiety to lipid A. Phosphoethanolamine modification of lipid A confers polymyxin resistance. Confers resistance to polymyxin-type antibiotics such as colistin. The protein is Phosphatidylethanolamine transferase Mcr-2 of Escherichia coli.